Reading from the N-terminus, the 1249-residue chain is Protein STU1 (1249 aa).

Low complexity-rich tracts occupy residues 138–156 (LNSSGSLKAGSLSSSTATK) and 555–574 (AASPMPSYASSSSTGAPSSA). Disordered stretches follow at residues 138 to 161 (LNSSGSLKAGSLSSSTATKSKPHE), 545 to 619 (KQLE…NPVF), 644 to 718 (HVET…LGLG), 755 to 846 (AEHE…NGNI), 860 to 891 (AFQTPLNPKTSALRSSSAIRTPAWKDSPRPEA), and 1084 to 1118 (HPAPPSSSADNSDPMTSALSQLSLSSSKESPEKRT). Positions 581–600 (KKMDLKAMLAERRRAVKEAG) are enriched in basic and acidic residues. Composition is skewed to low complexity over residues 647-667 (TSSPSPVRSPTPSSSATRIRP) and 708-718 (SPSLSPSLGLG). The segment covering 755-774 (AEHEVDELTLKEGQKTRDDG) has biased composition (basic and acidic residues). Polar residues-rich tracts occupy residues 809 to 822 (QQGNTFSTSTSGRV), 831 to 844 (ATGTTASLPNSRNG), and 863 to 878 (TPLNPKTSALRSSSAI). Low complexity predominate over residues 1089-1111 (SSSADNSDPMTSALSQLSLSSSK).

The protein belongs to the CLASP family. In terms of assembly, interacts with microtubules.

Its subcellular location is the cytoplasm. The protein resides in the cytoskeleton. The protein localises to the nucleus. It localises to the spindle. Microtubule binding protein that promotes the stabilization of dynamic microtubules. Required for mitotic spindle formation. The polypeptide is Protein STU1 (STU1) (Cryptococcus neoformans var. neoformans serotype D (strain JEC21 / ATCC MYA-565) (Filobasidiella neoformans)).